The sequence spans 934 residues: 2-oxoglutarate dehydrogenase E1 component (934 aa).

This sequence belongs to the alpha-ketoglutarate dehydrogenase family. Homodimer. Part of the 2-oxoglutarate dehydrogenase (OGDH) complex composed of E1 (2-oxoglutarate dehydrogenase), E2 (dihydrolipoamide succinyltransferase) and E3 (dihydrolipoamide dehydrogenase); the complex contains multiple copies of the three enzymatic components (E1, E2 and E3). Thiamine diphosphate is required as a cofactor.

The enzyme catalyses N(6)-[(R)-lipoyl]-L-lysyl-[protein] + 2-oxoglutarate + H(+) = N(6)-[(R)-S(8)-succinyldihydrolipoyl]-L-lysyl-[protein] + CO2. E1 component of the 2-oxoglutarate dehydrogenase (OGDH) complex which catalyzes the decarboxylation of 2-oxoglutarate, the first step in the conversion of 2-oxoglutarate to succinyl-CoA and CO(2). The protein is 2-oxoglutarate dehydrogenase E1 component of Staphylococcus epidermidis (strain ATCC 35984 / DSM 28319 / BCRC 17069 / CCUG 31568 / BM 3577 / RP62A).